The primary structure comprises 96 residues: Large ribosomal subunit protein bL21 (96 aa).

Residues 73-84 (KRRKRYQSRNGH) are compositionally biased toward basic residues. Residues 73 to 96 (KRRKRYQSRNGHRQQMTQIEVVSL) are disordered. Polar residues predominate over residues 85–96 (RQQMTQIEVVSL).

The protein belongs to the bacterial ribosomal protein bL21 family. As to quaternary structure, part of the 50S ribosomal subunit. Contacts protein L20.

This protein binds to 23S rRNA in the presence of protein L20. The chain is Large ribosomal subunit protein bL21 from Chlorobium phaeovibrioides (strain DSM 265 / 1930) (Prosthecochloris vibrioformis (strain DSM 265)).